Consider the following 179-residue polypeptide: MQEVIAGLERFTFAFEKDVEMQKGTGLLPFQGMDKSASAVCNFFTKGLCEKGKLCPFRHDRGEKMVVCKHWLRGLCKKGDHCKFLHQYDLTRMPECYFYSKFGDCSNKECSFLHVKPAFKSQDCPWYDQGFCKDGPLCKYRHVPRIMCLNYLVGFCPEGPKCQFAQKIREFKLLPGSKI.

5 consecutive C3H1-type zinc fingers follow at residues 35–61 (KSAS…RHDR), 62–89 (GEKM…HQYD), 90–117 (LTRM…HVKP), 118–145 (AFKS…HVPR), and 146–169 (IMCL…QKIR).

Belongs to the CPSF4/YTH1 family.

The sequence is that of Putative cleavage and polyadenylation specificity factor subunit 4-like protein (CPSF4L) from Homo sapiens (Human).